The following is a 509-amino-acid chain: Nucleolar GTP-binding protein 2 (509 aa).

Positions 1–14 are enriched in basic and acidic residues; it reads MGTGKKEATRRAKG. The segment at 1–22 is disordered; sequence MGTGKKEATRRAKGGETGNGFG. Residues 204–365 enclose the CP-type G domain; that stretch reads WNELYKVIDS…LIDCPGIVPP (162 aa). Residues 314–321 and 358–362 contribute to the GTP site; these read GYPNTGKS and DCPGI. A disordered region spans residues 480-509; the sequence is EMKKREIHEAPAATETAEETKEEEFKGFDD.

The protein belongs to the TRAFAC class YlqF/YawG GTPase family. NOG2 subfamily.

It is found in the nucleus. The protein resides in the nucleolus. GTPase that associates with pre-60S ribosomal subunits in the nucleolus and is required for their nuclear export and maturation. The protein is Nucleolar GTP-binding protein 2 (NOG2) of Yarrowia lipolytica (strain CLIB 122 / E 150) (Yeast).